We begin with the raw amino-acid sequence, 344 residues long: Arginine N-succinyltransferase (344 aa).

A succinyl-CoA-binding site is contributed by L125. H229 (proton donor) is an active-site residue.

The protein belongs to the arginine N-succinyltransferase family.

The enzyme catalyses succinyl-CoA + L-arginine = N(2)-succinyl-L-arginine + CoA + H(+). The protein operates within amino-acid degradation; L-arginine degradation via AST pathway; L-glutamate and succinate from L-arginine: step 1/5. Functionally, catalyzes the transfer of succinyl-CoA to arginine to produce N(2)-succinylarginine. This Shigella sonnei (strain Ss046) protein is Arginine N-succinyltransferase.